Consider the following 213-residue polypeptide: Uridine kinase (213 aa).

Position 14 to 21 (14 to 21) interacts with ATP; the sequence is GASASGKS.

Belongs to the uridine kinase family.

Its subcellular location is the cytoplasm. It carries out the reaction uridine + ATP = UMP + ADP + H(+). The enzyme catalyses cytidine + ATP = CMP + ADP + H(+). Its pathway is pyrimidine metabolism; CTP biosynthesis via salvage pathway; CTP from cytidine: step 1/3. It functions in the pathway pyrimidine metabolism; UMP biosynthesis via salvage pathway; UMP from uridine: step 1/1. This is Uridine kinase from Vibrio campbellii (strain ATCC BAA-1116).